Consider the following 261-residue polypeptide: MARKPLIAGNWKMNLNHLEAIALVQKIAFALPEKYFEKVDVAVIPPFVDIRSVQTLVEGDKLLLTYGAQDVSVHESGAYTGEISASMLAKLGCTFVVVGHSERRQYHHEDDATVLGKAKKALEHGLTPIVCIGEGLNVREAGTHVEYNLEQLRGSLKGLSAEQIAKVVIAYEPVWAIGTGKVASAADAQEVCGAIRAELAELAGPEVAAQVRVLYGGSVNAKNVGELVAQPDVDGALVGGASLKGDEFATLSAIAAGGPLP.

Residue 10 to 12 (NWK) coordinates substrate. Catalysis depends on histidine 100, which acts as the Electrophile. Glutamate 172 (proton acceptor) is an active-site residue. Residues glycine 178, serine 218, and 239-240 (GG) each bind substrate.

Belongs to the triosephosphate isomerase family. Homodimer.

It localises to the cytoplasm. It carries out the reaction D-glyceraldehyde 3-phosphate = dihydroxyacetone phosphate. It functions in the pathway carbohydrate biosynthesis; gluconeogenesis. Its pathway is carbohydrate degradation; glycolysis; D-glyceraldehyde 3-phosphate from glycerone phosphate: step 1/1. Involved in the gluconeogenesis. Catalyzes stereospecifically the conversion of dihydroxyacetone phosphate (DHAP) to D-glyceraldehyde-3-phosphate (G3P). This is Triosephosphate isomerase from Nocardia farcinica (strain IFM 10152).